Reading from the N-terminus, the 41-residue chain is Augerpeptide hhe6.1 (41 aa).

Disulfide bonds link cysteine 11-cysteine 32, cysteine 18-cysteine 35, and cysteine 31-cysteine 40.

In terms of tissue distribution, expressed by the venom duct.

Its subcellular location is the secreted. The polypeptide is Augerpeptide hhe6.1 (Hastula hectica (Sea snail)).